Reading from the N-terminus, the 375-residue chain is tRNA-specific 2-thiouridylase MnmA (375 aa).

Residues 16 to 23 (GMSGGVDS) and methionine 42 each bind ATP. The tract at residues 102 to 104 (NPD) is interaction with target base in tRNA. Residue cysteine 107 is the Nucleophile of the active site. A disulfide bridge connects residues cysteine 107 and cysteine 203. Glycine 131 is an ATP binding site. Residues 153-155 (KDQ) form an interaction with tRNA region. Cysteine 203 serves as the catalytic Cysteine persulfide intermediate. Positions 315-316 (RY) are interaction with tRNA.

Belongs to the MnmA/TRMU family.

It localises to the cytoplasm. It catalyses the reaction S-sulfanyl-L-cysteinyl-[protein] + uridine(34) in tRNA + AH2 + ATP = 2-thiouridine(34) in tRNA + L-cysteinyl-[protein] + A + AMP + diphosphate + H(+). Functionally, catalyzes the 2-thiolation of uridine at the wobble position (U34) of tRNA, leading to the formation of s(2)U34. The chain is tRNA-specific 2-thiouridylase MnmA from Pseudomonas aeruginosa (strain LESB58).